We begin with the raw amino-acid sequence, 827 residues long: Periplasmic nitrate reductase (827 aa).

Residues 1–32 (MNLSRRDFMKANAALAAASVAGLIIPVKNVNA) constitute a signal peptide (tat-type signal). One can recognise a 4Fe-4S Mo/W bis-MGD-type domain in the interval 37–93 (ITWDKAVCRFCGTGCAVLVGTKDGRVVASQGDPDAEVNRGLNCIKGYFLPKIMYGKD). [4Fe-4S] cluster is bound by residues Cys-44, Cys-47, Cys-51, and Cys-79. Mo-bis(molybdopterin guanine dinucleotide)-binding positions include Lys-81, Gln-148, Asn-173, Cys-177, 210-217 (WGSNMAEM), 242-246 (STFEH), 261-263 (QSD), Met-372, Gln-376, Asn-482, 508-509 (SD), Lys-531, Asp-558, and 717-726 (TGRILEHWHT). Phe-793 is a binding site for substrate. Mo-bis(molybdopterin guanine dinucleotide) contacts are provided by Asn-801 and Lys-818.

Belongs to the prokaryotic molybdopterin-containing oxidoreductase family. NasA/NapA/NarB subfamily. Component of the periplasmic nitrate reductase NapAB complex composed of NapA and NapB. The cofactor is [4Fe-4S] cluster. It depends on Mo-bis(molybdopterin guanine dinucleotide) as a cofactor. In terms of processing, predicted to be exported by the Tat system. The position of the signal peptide cleavage has not been experimentally proven.

The protein localises to the periplasm. It carries out the reaction 2 Fe(II)-[cytochrome] + nitrate + 2 H(+) = 2 Fe(III)-[cytochrome] + nitrite + H2O. Catalytic subunit of the periplasmic nitrate reductase complex NapAB. Receives electrons from NapB and catalyzes the reduction of nitrate to nitrite. This chain is Periplasmic nitrate reductase, found in Histophilus somni (strain 129Pt) (Haemophilus somnus).